A 94-amino-acid polypeptide reads, in one-letter code: Co-chaperonin GroES (94 aa).

This sequence belongs to the GroES chaperonin family. In terms of assembly, heptamer of 7 subunits arranged in a ring. Interacts with the chaperonin GroEL.

It is found in the cytoplasm. Its function is as follows. Together with the chaperonin GroEL, plays an essential role in assisting protein folding. The GroEL-GroES system forms a nano-cage that allows encapsulation of the non-native substrate proteins and provides a physical environment optimized to promote and accelerate protein folding. GroES binds to the apical surface of the GroEL ring, thereby capping the opening of the GroEL channel. This is Co-chaperonin GroES from Lactobacillus helveticus (strain DPC 4571).